Here is a 670-residue protein sequence, read N- to C-terminus: Transcription factor Ken 2 (670 aa).

Positions 108–176 (TDLLLICDGK…LYSGQVYVRS (69 aa)) constitute a BTB domain. Disordered regions lie at residues 200–288 (SDGS…DRDR) and 307–470 (NNHP…SDDA). A compositionally biased stretch (polar residues) spans 218–230 (NRNTEGITGSSVV). Residues 325–338 (HHLHHHHHHHHRQL) show a composition bias toward basic residues. Gly residues-rich tracts occupy residues 351-368 (GGGS…GESG) and 389-400 (SGGGGAGSGRRS). Positions 407-419 (EPAEDDEDYELDV) are enriched in acidic residues. The span at 451–464 (SDPVNLSIVKQQQD) shows a compositional bias: polar residues. The C2H2-type 1; degenerate zinc-finger motif lies at 586-594 (NLKTHLRVH). 2 C2H2-type zinc fingers span residues 600-623 (FACR…CSVH) and 636-658 (YTCC…LSGH).

The protein localises to the nucleus. Transcription factor required for terminalia development. Negative regulator of the JAK/STAT pathway: represses JAK/STAT-dependent expression of ventral veins lacking (vvl) in the posterior spiracles. This Culex quinquefasciatus (Southern house mosquito) protein is Transcription factor Ken 2.